The chain runs to 357 residues: MLLEKLNSATSKIKLIEEKLQDINLIKDQKKYSKIIKEYTYLEKINTKKIEYEKILSQINDTKTILEKEDQQEMKELIKQELIDLDKKKEDLEHQIKILLLPQDENDSKNIIIEIRAGTGGEEAALFANNLYSMYIKYSEKKKWKTEIINFNETELGGFKEIIFEIKGKDVFKKLKYESGVHRVQRIPITESNGRLQTSAATVAVLPNIEETEIDINEKDLRIDVYRSSGAGGQHVNTTDSAVRITHLPTGIVVQCQNERSQHKNKDQAMKILRARLYEFEDSKKQEQRSSNRKQQVGSGDRSERIRTYNFPQNRITDHRANITLYKLEEFMQGELDPLLDPLMIALQEQELKSNSI.

Gln-234 is modified (N5-methylglutamine). Positions Ser-283 to Gln-313 are disordered.

It belongs to the prokaryotic/mitochondrial release factor family. Methylated by PrmC. Methylation increases the termination efficiency of RF1.

It localises to the cytoplasm. In terms of biological role, peptide chain release factor 1 directs the termination of translation in response to the peptide chain termination codons UAG and UAA. The polypeptide is Peptide chain release factor 1 (prfA) (Borreliella burgdorferi (strain ATCC 35210 / DSM 4680 / CIP 102532 / B31) (Borrelia burgdorferi)).